The following is a 211-amino-acid chain: RILP-like protein 2 (211 aa).

A disordered region spans residues 1–32; it reads MEEPPVREEEEEEGEEDEERDEVGPEGALGKS. Residues 8-21 show a composition bias toward acidic residues; sequence EEEEEEGEEDEERD. In terms of domain architecture, RH1 spans 24 to 106; that stretch reads GPEGALGKSP…RKEVEGLRRQ (83 aa). The stretch at 70-164 forms a coiled coil; that stretch reads RVLEMLEALV…VQEELQCYKS (95 aa). Serine 107 bears the Phosphoserine mark. An RH2 domain is found at 130-201; that stretch reads RPRFTLQELR…NKEEKTIIKK (72 aa). A disordered region spans residues 166-190; it reads LIPPREGPGGRREKDAVVTSAKNAG.

This sequence belongs to the RILPL family. Homodimer. Interacts with RAC1. Interacts (via N-terminus) with MYO5A, the interaction is required for its role in dendrite formation. Interacts with RAB8A; interaction is dependent on the phosphorylation of RAB8A on 'Thr-72'. Interacts with RAB10 and RAB12; interaction is dependent on the phosphorylation of 'Thr-73' on RAB10 and 'Ser-105' on RAB12. In terms of tissue distribution, widely expressed. Expressed at higher level in lung.

It is found in the cytoplasm. The protein localises to the cytosol. The protein resides in the cytoskeleton. Its subcellular location is the microtubule organizing center. It localises to the centrosome. It is found in the cell projection. The protein localises to the cilium. Functionally, involved in cell shape and neuronal morphogenesis, positively regulating the establishment and maintenance of dendritic spines. Plays a role in cellular protein transport, including protein transport away from primary cilia. May function via activation of RAC1 and PAK1. This chain is RILP-like protein 2 (RILPL2), found in Homo sapiens (Human).